The sequence spans 261 residues: Global transcriptional regulator CodY (261 aa).

Positions 1-159 are GAF domain; it reads MPNLLEKTRK…ASTVVGIQLL (159 aa). The H-T-H motif DNA-binding region spans 207–226; it reads ASVIADRIGITRSVIVNALR.

This sequence belongs to the CodY family.

It is found in the cytoplasm. Functionally, DNA-binding global transcriptional regulator which is involved in the adaptive response to starvation and acts by directly or indirectly controlling the expression of numerous genes in response to nutrient availability. During rapid exponential growth, CodY is highly active and represses genes whose products allow adaptation to nutrient depletion. The sequence is that of Global transcriptional regulator CodY from Streptococcus agalactiae serotype Ia (strain ATCC 27591 / A909 / CDC SS700).